Consider the following 401-residue polypeptide: Acetate kinase (401 aa).

Residue asparagine 7 participates in Mg(2+) binding. Lysine 14 is a binding site for ATP. Arginine 90 serves as a coordination point for substrate. The Proton donor/acceptor role is filled by aspartate 147. ATP-binding positions include 207–211 (HMGNG), 282–284 (DMR), and 331–335 (GIGEN). Residue glutamate 385 coordinates Mg(2+).

The protein belongs to the acetokinase family. Homodimer. Mg(2+) is required as a cofactor. Requires Mn(2+) as cofactor.

The protein localises to the cytoplasm. The enzyme catalyses acetate + ATP = acetyl phosphate + ADP. It functions in the pathway metabolic intermediate biosynthesis; acetyl-CoA biosynthesis; acetyl-CoA from acetate: step 1/2. In terms of biological role, catalyzes the formation of acetyl phosphate from acetate and ATP. Can also catalyze the reverse reaction. This is Acetate kinase from Clostridium acetobutylicum (strain ATCC 824 / DSM 792 / JCM 1419 / IAM 19013 / LMG 5710 / NBRC 13948 / NRRL B-527 / VKM B-1787 / 2291 / W).